The chain runs to 267 residues: Nus factor SuhB (267 aa).

Residues glutamate 67, aspartate 84, and leucine 86 each contribute to the Mg(2+) site. Residue glutamate 67 coordinates substrate. Residues 86–89 (LDGT), arginine 183, and aspartate 212 each bind substrate.

The protein belongs to the inositol monophosphatase superfamily. As to quaternary structure, homodimer. The rRNA transcription and antitermination complex (rrnTAC) consists of RNA polymerase (RNAP), NusA, NusB, NusE (rpsJ), NusG, SubB, ribosomal protein S4, DNA and precursor rRNA; S4 is more flexible than other subunits. Mg(2+) serves as cofactor.

The protein resides in the cytoplasm. The enzyme catalyses a myo-inositol phosphate + H2O = myo-inositol + phosphate. Part of the processive rRNA transcription and antitermination complex (rrnTAC). The complex forms an RNA-chaperone ring around the RNA exit tunnel of RNA polymerase (RNAP). It supports rapid transcription and antitermination of rRNA operons, cotranscriptional rRNA folding, and annealing of distal rRNA regions to allow correct ribosome biogenesis. This subunit may play a central role in organizing the structure. IMPase activity is not required for its Nus factor function. The protein is Nus factor SuhB (suhB) of Escherichia coli O157:H7.